Reading from the N-terminus, the 399-residue chain is Elongation factor Tu (399 aa).

One can recognise a tr-type G domain in the interval 10-209 (KPHVNIGTIG…AVDSYIPTPV (200 aa)). Residues 19–26 (GHVDHGKT) are G1. Position 19-26 (19-26 (GHVDHGKT)) interacts with GTP. Position 26 (T26) interacts with Mg(2+). A G2 region spans residues 60–64 (GITIA). The segment at 81–84 (DCPG) is G3. GTP contacts are provided by residues 81 to 85 (DCPGH) and 136 to 139 (NKAD). Residues 136 to 139 (NKAD) are G4. Residues 174–176 (SAL) form a G5 region.

Belongs to the TRAFAC class translation factor GTPase superfamily. Classic translation factor GTPase family. EF-Tu/EF-1A subfamily. As to quaternary structure, monomer.

It localises to the cytoplasm. The catalysed reaction is GTP + H2O = GDP + phosphate + H(+). Functionally, GTP hydrolase that promotes the GTP-dependent binding of aminoacyl-tRNA to the A-site of ribosomes during protein biosynthesis. In Campylobacter concisus (strain 13826), this protein is Elongation factor Tu.